Here is a 481-residue protein sequence, read N- to C-terminus: Glucokinase-1 (481 aa).

In terms of domain architecture, Hexokinase spans 4–477 (PKLTKAVDSI…SGVGAALCAL (474 aa)). Positions 64–204 (SGQEHGVTML…LSNVHVVALT (141 aa)) are hexokinase small subdomain. An ATP-binding site is contributed by Lys101. The segment at 146-172 (KMGFTFSYPVDQTSLSSGKLIRWTKGF) is glucose-binding. Positions 205–466 (NDTTGTLLAR…RDVHLRISKD (262 aa)) are hexokinase large subdomain. 466–471 (DGSGVG) serves as a coordination point for ATP.

The protein belongs to the hexokinase family.

The catalysed reaction is D-glucose + ATP = D-glucose 6-phosphate + ADP + H(+). It carries out the reaction a D-hexose + ATP = a D-hexose 6-phosphate + ADP + H(+). It catalyses the reaction D-mannose + ATP = D-mannose 6-phosphate + ADP + H(+). It participates in carbohydrate metabolism; hexose metabolism. It functions in the pathway carbohydrate degradation; glycolysis; D-glyceraldehyde 3-phosphate and glycerone phosphate from D-glucose: step 1/4. In terms of biological role, glukokinase specific for aldohexoses. Phosphorylates glucose and mannose, but not fructose. This is Glucokinase-1 (GLK1) from Kluyveromyces lactis (strain ATCC 8585 / CBS 2359 / DSM 70799 / NBRC 1267 / NRRL Y-1140 / WM37) (Yeast).